A 302-amino-acid chain; its full sequence is Zinc transporter ZIP1 (302 aa).

The Extracellular segment spans residues 1–6; sequence MDYLLQ. A helical transmembrane segment spans residues 7–27; the sequence is VKVGALVGLLLLTLFFGFIPA. Residues 28–44 lie on the Cytoplasmic side of the membrane; sequence RMKWFHVTGGTELHKAV. Residues 45–65 form a helical membrane-spanning segment; sequence LSFVSCFAGGVFLSACLLDII. Topologically, residues 66-86 are extracellular; it reads PDYLSDIHGELQKRDLDDGFP. A helical transmembrane segment spans residues 87–107; it reads LPEFIMACGFFTVLILEKMVL. Residues 108 to 158 are Cytoplasmic-facing; that stretch reads SCTEGHRNEETAPLLAPAAPNGHAHGHPSVNDLEGSGHHVHVDFHAHSSFR. The helical transmembrane segment at 159-179 threads the bilayer; sequence SFMLFLSLSLHSVFEGLAIGL. Residues 180–185 are Extracellular-facing; it reads QTTNAK. Residues 186–206 form a helical membrane-spanning segment; it reads VLEICIAILVHKSIIVFSLSV. Topologically, residues 207–219 are cytoplasmic; it reads KLVQSAVKPLWVV. A helical transmembrane segment spans residues 220–240; it reads LYVTVFAIMSPLGIGIGIVVI. At 241–247 the chain is on the extracellular side; the sequence is ETERQAG. The chain crosses the membrane as a helical span at residues 248–268; sequence GLIQAVLEGLAAGTFIYITFL. Residues 269–281 lie on the Cytoplasmic side of the membrane; that stretch reads EILPHELNSSERP. Residues 282 to 302 form a helical membrane-spanning segment; sequence LLKVLFLLCGFSIMAALCFLG.

This sequence belongs to the ZIP transporter (TC 2.A.5) family. As to expression, ubiquitous. Highest levels in ovary, high levels in heart, eye, kidney and brain, moderate levels in intestine and low levels in gill and skin.

The protein resides in the cell membrane. It localises to the endoplasmic reticulum membrane. It catalyses the reaction Zn(2+)(in) = Zn(2+)(out). Transporter for the divalent cation Zn(2+). Mediates the influx of Zn(2+) into cells from extracellular space. This chain is Zinc transporter ZIP1 (slc39a1), found in Danio rerio (Zebrafish).